A 339-amino-acid polypeptide reads, in one-letter code: Transposase for insertion sequence element IS1086 (339 aa).

Residues aspartate 176 to leucine 329 enclose the Integrase catalytic domain.

Belongs to the transposase IS30 family.

Required for the transposition of the insertion element. In Cupriavidus metallidurans (strain ATCC 43123 / DSM 2839 / NBRC 102507 / CH34) (Ralstonia metallidurans), this protein is Transposase for insertion sequence element IS1086 (IS1086).